The primary structure comprises 807 residues: G-type lectin S-receptor-like serine/threonine-protein kinase At1g61420 (807 aa).

The first 24 residues, 1–24 (MGKKWIVFFAYLLLSSFFISSSSA), serve as a signal peptide directing secretion. One can recognise a Bulb-type lectin domain in the interval 25 to 144 (GITKESPLPI…FSGRTLWQSF (120 aa)). Over 25–426 (GITKESPLPI…ELGGNKRKKA (402 aa)) the chain is Extracellular. N-linked (GlcNAc...) asparagine glycosylation is found at Asn53, Asn94, Asn117, Asn134, Asn236, and Asn267. The EGF-like; atypical domain occupies 278-314 (PEHSCDYYGVCGPFGLCVKSVPPKCTCFKGFVPKLIE). 2 disulfides stabilise this stretch: Cys282/Cys294 and Cys288/Cys302. 3 N-linked (GlcNAc...) asparagine glycosylation sites follow: Asn320, Asn336, and Asn375. Residues 333 to 413 (CQGNSTGKYA…EGGELLSIRL (81 aa)) enclose the PAN domain. Disulfide bonds link Cys368-Cys389 and Cys372-Cys378. The helical transmembrane segment at 427-447 (ITASIVSLSLVVIIAFVAFCF) threads the bilayer. The Cytoplasmic portion of the chain corresponds to 448 to 807 (WRYRVKHNAD…EMTKSVILGR (360 aa)). The region spanning 494–779 (FSISNKLGQG…DLPPPEQPTF (286 aa)) is the Protein kinase domain. Residues 500 to 508 (LGQGGFGPV) and Lys522 contribute to the ATP site. Ser528 and Ser543 each carry phosphoserine. The interval 583–600 (RKRLEIDWPKRLDIIQGI) is caM-binding. Asp619 functions as the Proton acceptor in the catalytic mechanism. Phosphoserine is present on residues Ser623 and Ser636. Thr653 carries the phosphothreonine modification. Residues Ser696 and Ser790 each carry the phosphoserine modification.

It belongs to the protein kinase superfamily. Ser/Thr protein kinase family.

The protein localises to the cell membrane. The catalysed reaction is L-seryl-[protein] + ATP = O-phospho-L-seryl-[protein] + ADP + H(+). The enzyme catalyses L-threonyl-[protein] + ATP = O-phospho-L-threonyl-[protein] + ADP + H(+). This is G-type lectin S-receptor-like serine/threonine-protein kinase At1g61420 from Arabidopsis thaliana (Mouse-ear cress).